Reading from the N-terminus, the 158-residue chain is Dysbindin domain-containing protein 2 (158 aa).

Positions 79 to 158 (FLPCEESSPA…DGGAEPGPCS (80 aa)) are disordered. Over residues 106-131 (PTSDRTTSRTSSLSSDSSNLRSPNPS) the composition is skewed to low complexity. A phosphoserine mark is found at Ser119 and Ser120. Thr137 bears the Phosphothreonine mark. Residue Ser142 is modified to Phosphoserine. Positions 142-151 (SDEEDGDDGG) are enriched in acidic residues.

This sequence belongs to the dysbindin family. In terms of assembly, monomer. Interacts with CSNK1D and CSNK1E.

May modulate the activity of casein kinase-1. Inhibits CSNK1D autophosphorylation (in vitro). This is Dysbindin domain-containing protein 2 (Dbndd2) from Mus musculus (Mouse).